The sequence spans 88 residues: UPF0335 protein MexAM1_META1p2947 (88 aa).

It belongs to the UPF0335 family.

This Methylorubrum extorquens (strain ATCC 14718 / DSM 1338 / JCM 2805 / NCIMB 9133 / AM1) (Methylobacterium extorquens) protein is UPF0335 protein MexAM1_META1p2947.